The chain runs to 810 residues: Transitional endoplasmic reticulum ATPase homolog 2 (810 aa).

Residues 252-258 (PGTGKTL), Asn353, His389, and 526-531 (GCGKTL) contribute to the ATP site. The segment covering 713-727 (RQEKERQDRSARGEE) has biased composition (basic and acidic residues). Disordered regions lie at residues 713 to 732 (RQEK…MEDE) and 777 to 810 (FGNN…DLYN). The segment covering 793 to 802 (PVGGNGGSGG) has biased composition (gly residues). The tract at residues 805–810 (DDDLYN) is interaction with ufd-2.

This sequence belongs to the AAA ATPase family. CDC48 subfamily. Homohexamer; oligomerization is ATP-independent. Forms a ring-shaped particle of 18.3 nm diameter, that displays 6-fold radial symmetry. Interacts with cdc-48.1 and thus may form heterohexamers. Forms a complex composed of ubxn-3, cdc-48.1 and/or cdc-48.2 and substrate cdt-1. Interacts (via N-terminus) with ubxn-3. Interacts (via N-terminus) with atx-3 (via RRDR motif). Interacts (via N-terminus) with ubxn-5. Interacts with ufd-1. Interacts (via DDDLYN motif) with ufd-2. Interacts (via N-terminus) with ubxn-1. Interacts (via N-terminus) with ubxn-2. Interacts (via N-terminus) with ubxn-4. Interacts with ubxn-6. In terms of tissue distribution, expressed in body wall muscles.

The protein resides in the cytoplasm. It catalyses the reaction ATP + H2O = ADP + phosphate + H(+). The first ATP-binding region has low ATPase activity. The second ATP-binding region is responsible for ATPase activity. ATP binding to the first ATP-binding region induces intrinsic activity of the second ATP-binding region. While ATP binding to the first ATP-binding region appears to prevent ATP hydrolysis by the second ATP-binding region, ADP-binding to first region promotes the coordinate and cooperative ATPase cycle of the second ATP-binding region. ATP binding to the first ATP-binding region induces a conformational change, promoting the rotation of the first ATP-binding region relative to the second ATP-binding region in the hexamer. Inhibited by N-ethylmaleimide (NEM). Its function is as follows. ATP-dependent chaperone which probably uses the energy provided by ATP hydrolysis to generate mechanical force to unfold substrate proteins, disassemble protein complexes, and disaggregate protein aggregates. However, able to prevent aggregation of unfolded proteins also in an ATP-independent manner. Targets polyubiquitinated proteins for proteasomal degradation by binding to 'Lys-48'-linked polyubiquitin chains. Involved in the cytoplasmic elimination of misfolded proteins exported from the ER. This pathway, known as ERAD, prevents the activation of the unfolded protein response (UPR) caused by the accumulation of misfolded proteins in the ER. Together with udf-2 and chn-1, regulates myosin assembly in body wall muscles by targeting myosin chaperone unc-45 for proteasomal degradation. During oocyte meiosis and together with cdc-48.1, required for chromosome condensation at the diakinesis phase in prophase I and for progression of metaphase I. During the first embryonic cell division, regulates DNA replication and thus chromosome segregation and decondensation, and nuclear envelope re-assembly. In S phase and in association with ufd-1, npl-4.1 and/or npl-4.2 and ubxn-3, ensures the degradation of DNA licensing factor cdt-1 after the initiation of DNA replication and thus the disassembly of the DNA replication CMG helicase complex by promoting the dissociation from chromatin of several of its components including cdc-45 and sld-5. Regulates ubxn-3 nuclear localization during S phase. During the first embryonic cell divisions and together with cdc-48.1, regulates the re-assembly of the nuclear envelope after mitosis possibly by inactivating kinase air-2, a component of the chromosomal passenger complex (CPC). The protein is Transitional endoplasmic reticulum ATPase homolog 2 (cdc-48.2) of Caenorhabditis elegans.